The chain runs to 191 residues: Programmed cell death protein 6 (191 aa).

Alanine 2 carries the post-translational modification N-acetylalanine. 5 consecutive EF-hand domains span residues 23-58, 59-89, 90-125, 126-161, and 162-191; these read PDQSFLWNVFQRVDKDRSGVISDNELQQALSNGTWT, PFNPVTVRSIISMFDRENKAGVNFSEFTGVW, KYITDWQNVFRTYDRDNSGMIDKHELKQALSGFGYR, LSDQFHDILIRKFDRQGRGQIAFDDFIQGCIVLQRL, and TDIFRRYDTDQDGWIQVSYEQYLSMVFSIV. Residues aspartate 36, aspartate 38, serine 40, valine 42, and glutamate 47 each coordinate Ca(2+). Ca(2+)-binding residues include aspartate 103, aspartate 105, serine 107, methionine 109, and glutamate 114. The Mg(2+) site is built by aspartate 169, aspartate 171, aspartate 173, and tryptophan 175.

Homodimer and heterodimer; heterodimerizes (via the EF-hand 5) with PEF1. Isoform 1 and isoform 2 self-associate; probably forming homodimers. Interacts with CPNE4 (via VWFA domain). Interacts with PDCD6IP; the interaction is calcium-dependent. Interacts with RBM22. Interacts with PLSCR4. Interacts with ANXA7 and TSG101. Interacts with DAPK1. Interacts with SEC31A; the interaction is calcium-dependent and promotes monoubiquitination of SEC31A. Interacts with ANXA11 (via N-terminus); the interaction is calcium-dependent. Interacts with PLSCR3 (via N-terminus); the interaction is calcium-dependent. Interacts with MCOLN1; the interaction is calcium-dependent. Interacts with KDR; the interaction is calcium-dependent. Interacts with HEBP2; the interaction is calcium-dependent. Interacts with TFG. Isoform 1: Interacts with SHISA5, leading to stabilize it. Isoform 2: Does not interact with SHISA5. Isoform 2: Does not interact with PDCD6IP, TSG101, ANXA7 and ANXA11.

It is found in the endoplasmic reticulum membrane. Its subcellular location is the cytoplasmic vesicle. The protein resides in the COPII-coated vesicle membrane. It localises to the cytoplasm. The protein localises to the nucleus. It is found in the endosome. In terms of biological role, calcium sensor that plays a key role in processes such as endoplasmic reticulum (ER)-Golgi vesicular transport, endosomal biogenesis or membrane repair. Acts as an adapter that bridges unrelated proteins or stabilizes weak protein-protein complexes in response to calcium: calcium-binding triggers exposure of apolar surface, promoting interaction with different sets of proteins thanks to 3 different hydrophobic pockets, leading to translocation to membranes. Involved in ER-Golgi transport. Regulates ER-Golgi transport by promoting the association between PDCD6IP and TSG101, thereby bridging together the ESCRT-III and ESCRT-I complexes. Together with PEF1, acts as a calcium-dependent adapter for the BCR(KLHL12) complex, a complex involved in ER-Golgi transport by regulating the size of COPII coats. In response to cytosolic calcium increase, the heterodimer formed with PEF1 interacts with, and bridges together the BCR(KLHL12) complex and SEC31 (SEC31A or SEC31B), promoting monoubiquitination of SEC31 and subsequent collagen export, which is required for neural crest specification. Involved in the regulation of the distribution and function of MCOLN1 in the endosomal pathway. Promotes localization and polymerization of TFG at endoplasmic reticulum exit site. Required for T-cell receptor-, Fas-, and glucocorticoid-induced apoptosis. May mediate Ca(2+)-regulated signals along the death pathway: interaction with DAPK1 can accelerate apoptotic cell death by increasing caspase-3 activity. Its role in apoptosis may however be indirect, as suggested by knockout experiments. May inhibit KDR/VEGFR2-dependent angiogenesis; the function involves inhibition of VEGF-induced phosphorylation of the Akt signaling pathway. Has a lower Ca(2+) affinity than isoform 1. This is Programmed cell death protein 6 from Rattus norvegicus (Rat).